We begin with the raw amino-acid sequence, 201 residues long: dTTP/UTP pyrophosphatase (201 aa).

Catalysis depends on Asp80, which acts as the Proton acceptor.

This sequence belongs to the Maf family. YhdE subfamily. Requires a divalent metal cation as cofactor.

The protein localises to the cytoplasm. The catalysed reaction is dTTP + H2O = dTMP + diphosphate + H(+). The enzyme catalyses UTP + H2O = UMP + diphosphate + H(+). Functionally, nucleoside triphosphate pyrophosphatase that hydrolyzes dTTP and UTP. May have a dual role in cell division arrest and in preventing the incorporation of modified nucleotides into cellular nucleic acids. The polypeptide is dTTP/UTP pyrophosphatase (Novosphingobium aromaticivorans (strain ATCC 700278 / DSM 12444 / CCUG 56034 / CIP 105152 / NBRC 16084 / F199)).